We begin with the raw amino-acid sequence, 175 residues long: Protein LpfE (175 aa).

The first 20 residues, 1–20, serve as a signal peptide directing secretion; the sequence is MKNLHALMPACLLLTASAMA.

This sequence belongs to the fimbrial protein family.

Its subcellular location is the fimbrium. The sequence is that of Protein LpfE (lpfE) from Salmonella typhimurium (strain LT2 / SGSC1412 / ATCC 700720).